The chain runs to 202 residues: Flagellar transcriptional regulator FlhC (202 aa).

Zn(2+) is bound by residues Cys137, Cys140, Cys157, and Cys160.

The protein belongs to the FlhC family. In terms of assembly, heterohexamer composed of two FlhC and four FlhD subunits. Each FlhC binds a FlhD dimer, forming a heterotrimer, and a hexamer assembles by dimerization of two heterotrimers. Zn(2+) is required as a cofactor.

The protein resides in the cytoplasm. Functionally, functions in complex with FlhD as a master transcriptional regulator that regulates transcription of several flagellar and non-flagellar operons by binding to their promoter region. Activates expression of class 2 flagellar genes, including fliA, which is a flagellum-specific sigma factor that turns on the class 3 genes. Also regulates genes whose products function in a variety of physiological pathways. This Variovorax paradoxus (strain S110) protein is Flagellar transcriptional regulator FlhC.